The primary structure comprises 33 residues: uncharacterized protein (33 aa).

The tract at residues 1–24 (MRTGTRCDLGELSHPRKTLPPRGM) is disordered.

This is an uncharacterized protein from Treponema pallidum (strain Nichols).